The sequence spans 1218 residues: ATP-dependent helicase/deoxyribonuclease subunit B (1218 aa).

The 279-residue stretch at 1-279 folds into the UvrD-like helicase ATP-binding domain; the sequence is MRFIVGRAGT…VFLTETHRFE (279 aa). 6 to 13 contributes to the ATP binding site; that stretch reads GRAGTGKS. A UvrD-like helicase C-terminal domain is found at 281–588; the sequence is AGLKHLERFY…LVGSLDRSRN (308 aa). [4Fe-4S] cluster is bound at residue Cys-786. Positions 987–1006 are disordered; sequence LAEGSKGSEGSEGSEDSEDS. [4Fe-4S] cluster contacts are provided by Cys-1126, Cys-1129, and Cys-1135. Residues 1160–1169 are compositionally biased toward polar residues; it reads RVQSQDSEQY. A disordered region spans residues 1160–1218; the sequence is RVQSQDSEQYPEQHPPTSVPGETSRRALQKDGGNSPRGQELIWLGEDEAGAGKEDDGHE. The span at 1209–1218 shows a compositional bias: basic and acidic residues; it reads GAGKEDDGHE.

Belongs to the helicase family. AddB/RexB type 1 subfamily. Heterodimer of AddA and AddB. The cofactor is Mg(2+). It depends on [4Fe-4S] cluster as a cofactor.

The heterodimer acts as both an ATP-dependent DNA helicase and an ATP-dependent, dual-direction single-stranded exonuclease. Recognizes the chi site generating a DNA molecule suitable for the initiation of homologous recombination. The AddB subunit has 5' -&gt; 3' nuclease activity but not helicase activity. The polypeptide is ATP-dependent helicase/deoxyribonuclease subunit B (Desulfitobacterium hafniense (strain DSM 10664 / DCB-2)).